The sequence spans 390 residues: MLFSKSLLLSVLASLSFAAPVEKREKTLTLDFDVKRISSKAKNVTVASSPGFRRNLRAASDAGVTISLENEYSFYLTTIEIGTPGQKLQVDVDTGSSDLWVPGQGTSSLYGTYDHTKSTSYKKDRSGFSISYGDGSSARGDWAQETVSIGGASITGLEFGDATSQDVGQGLLGIGLKGNEASAQSSNSFTYDNLPLKLKDQGLIDKAAYSLYLNSEDATSGSILFGGSDSSKYSGSLATLDLVNIDDEGDSTSGAVAFFVELEGIEAGSSSITKTTYPALLDSGTTLIYAPSSIASSIGREYGTYSYSYGGYVTSCDATGPDFKFSFNGKTITVPFSNLLFQNSEGDSECLVGVLSSGSNYYILGDAFLRSAYVYYDIDNSQVGIAQAKY.

Positions 1–18 are cleaved as a signal peptide; it reads MLFSKSLLLSVLASLSFA. Residues 75 to 386 form the Peptidase A1 domain; sequence YLTTIEIGTP…DIDNSQVGIA (312 aa). Residues Asp-93 and Asp-282 contribute to the active site.

This sequence belongs to the peptidase A1 family.

This Saccharomycopsis fibuligera (Yeast) protein is Acid protease (PEP1).